Consider the following 258-residue polypeptide: 3-deoxy-manno-octulosonate cytidylyltransferase (258 aa).

Belongs to the KdsB family.

It is found in the cytoplasm. The enzyme catalyses 3-deoxy-alpha-D-manno-oct-2-ulosonate + CTP = CMP-3-deoxy-beta-D-manno-octulosonate + diphosphate. It participates in nucleotide-sugar biosynthesis; CMP-3-deoxy-D-manno-octulosonate biosynthesis; CMP-3-deoxy-D-manno-octulosonate from 3-deoxy-D-manno-octulosonate and CTP: step 1/1. It functions in the pathway bacterial outer membrane biogenesis; lipopolysaccharide biosynthesis. In terms of biological role, activates KDO (a required 8-carbon sugar) for incorporation into bacterial lipopolysaccharide in Gram-negative bacteria. The polypeptide is 3-deoxy-manno-octulosonate cytidylyltransferase (Nitrobacter hamburgensis (strain DSM 10229 / NCIMB 13809 / X14)).